Reading from the N-terminus, the 93-residue chain is Acylphosphatase (93 aa).

The region spanning 7–93 is the Acylphosphatase-like domain; sequence CLKAVISGKV…GEFRAFEILR (87 aa). Residues arginine 22 and asparagine 40 contribute to the active site.

This sequence belongs to the acylphosphatase family.

It carries out the reaction an acyl phosphate + H2O = a carboxylate + phosphate + H(+). This chain is Acylphosphatase (acyP), found in Acaryochloris marina (strain MBIC 11017).